The primary structure comprises 186 residues: Intraflagellar transport protein 27 homolog (186 aa).

GTP-binding positions include 12–19 (GDPAVGKT), 64–68 (DSAGK), and 123–126 (NKTD).

It belongs to the small GTPase superfamily. Rab family. Component of the IFT complex B, at least composed of IFT20, IFT25, IFT27, IFT52, IFT57, IFT74, IFT81, IFT88 and TRAF3IP1. Interacts with IFT25. Interacts with IFT70B. Interacts with RABL2/RABL2A; binding is equal in the presence of GTP or GDP. Interacts with ARL6; recognizes and binds with the GTP-free form of ARL6.

It localises to the cell projection. The protein resides in the cilium. It is found in the cytoplasm. The protein localises to the flagellum. Functionally, small GTPase-like component of the intraflagellar transport (IFT) complex B that promotes the exit of the BBSome complex from cilia via its interaction with ARL6. Not involved in entry of the BBSome complex into cilium. Prevents aggregation of GTP-free ARL6. Required for hedgehog signaling. Forms a subcomplex within the IFT complex B with IFT25. Its role in intraflagellar transport is mainly seen in tissues rich in ciliated cells such as kidney and testis. Essential for male fertility, spermiogenesis and sperm flagella formation. Plays a role in the early development of the kidney. May be involved in the regulation of ureteric bud initiation. The protein is Intraflagellar transport protein 27 homolog (IFT27) of Homo sapiens (Human).